Consider the following 79-residue polypeptide: Protein OPG081 (79 aa).

Over 2–8 (VDAITVL) the chain is Intravirion. A helical membrane pass occupies residues 9 to 29 (TAIGITVLMLLMVISGAALIV). At 30–47 (KELNPNDIFTMQSLKFNR) the chain is on the virion surface side. The chain crosses the membrane as a helical span at residues 48–68 (AVTIFKYIGLFIYIPGTIILY). The Intravirion portion of the chain corresponds to 69–79 (ATYVKSLLMKS).

It belongs to the orthopoxvirus OPG081 family.

It localises to the virion membrane. In terms of biological role, envelope protein. This Vaccinia virus (strain Western Reserve) (VACV) protein is Protein OPG081 (OPG081).